The chain runs to 418 residues: Transmembrane protease serine 11D (418 aa).

Over Met1 to Cys20 the chain is Cytoplasmic. Residues Phe21–Leu41 traverse the membrane as a helical; Signal-anchor for type II membrane protein segment. The Extracellular portion of the chain corresponds to Ala42–Ile418. Residues Lys46–Gln163 enclose the SEA domain. Asn144 carries N-linked (GlcNAc...) asparagine glycosylation. 4 disulfides stabilise this stretch: Cys173–Cys292, Cys212–Cys228, Cys337–Cys353, and Cys364–Cys393. The 231-residue stretch at Ile187–Gly417 folds into the Peptidase S1 domain. Catalysis depends on charge relay system residues His227 and Asp272. Ser368 (charge relay system) is an active-site residue.

The protein belongs to the peptidase S1 family. Monomer. In terms of tissue distribution, located in the cells of the submucosal serous glands of the bronchi and trachea.

The protein localises to the cell membrane. It is found in the secreted. Strongly inhibited by diisopropyl fluorophosphate, leupeptin, antipain, aprotinin, and soybean trypsin inhibitor, but hardly inhibited by secretory leukocyte protease inhibitor at 10 microM. Functionally, may play some biological role in the host defense system on the mucous membrane independently of or in cooperation with other substances in airway mucous or bronchial secretions. Plays a role in the proteolytic processing of ACE2. Proteolytically cleaves and activates the human coronavirus 229E (HCoV-229E) spike glycoprotein which facilitate virus-cell membrane fusions; spike proteins are synthesized and maintained in precursor intermediate folding states and proteolysis permits the refolding and energy release required to create stable virus-cell linkages and membrane coalescence. Preferentially cleaves the C-terminal side of arginine residues at the P1 position of certain peptides, cleaving Boc-Phe-Ser-Arg-4-methylcoumaryl-7-amide most efficiently and having an optimum pH of 8.6 with this substrate. The polypeptide is Transmembrane protease serine 11D (TMPRSS11D) (Homo sapiens (Human)).